Consider the following 73-residue polypeptide: Homeodomain-only protein (73 aa).

Residues 3-62 (TEKSVTPTEEQLEILEYNFCKVNKHPDPTTLCLIAAETGLSEEQTLKWFKQRLAEWRKSE) constitute a DNA-binding region (homeobox; degenerate).

It is found in the nucleus. It localises to the cytoplasm. Functionally, atypical homeodomain protein which does not bind DNA and is required to modulate cardiac growth and development. May act via an interaction with SRF, leading to modulate the expression of SRF-dependent cardiac-specific genes and cardiac development. May act as a co-chaperone for HSPA1A and HSPA1B chaperone proteins and assist in chaperone-mediated protein refolding. The protein is Homeodomain-only protein (HOPX) of Gallus gallus (Chicken).